We begin with the raw amino-acid sequence, 406 residues long: Multifunctional CCA protein (406 aa).

ATP is bound by residues Gly8 and Arg11. Residues Gly8 and Arg11 each coordinate CTP. Residues Asp21 and Asp23 each coordinate Mg(2+). 3 residues coordinate ATP: Arg91, Arg137, and Arg140. Residues Arg91, Arg137, and Arg140 each coordinate CTP. The HD domain maps to 228–329 (TGIHTLMVAQ…IKILNKFDVW (102 aa)).

The protein belongs to the tRNA nucleotidyltransferase/poly(A) polymerase family. Bacterial CCA-adding enzyme type 1 subfamily. In terms of assembly, monomer. Can also form homodimers and oligomers. The cofactor is Mg(2+). Requires Ni(2+) as cofactor.

It carries out the reaction a tRNA precursor + 2 CTP + ATP = a tRNA with a 3' CCA end + 3 diphosphate. It catalyses the reaction a tRNA with a 3' CCA end + 2 CTP + ATP = a tRNA with a 3' CCACCA end + 3 diphosphate. Its function is as follows. Catalyzes the addition and repair of the essential 3'-terminal CCA sequence in tRNAs without using a nucleic acid template. Adds these three nucleotides in the order of C, C, and A to the tRNA nucleotide-73, using CTP and ATP as substrates and producing inorganic pyrophosphate. tRNA 3'-terminal CCA addition is required both for tRNA processing and repair. Also involved in tRNA surveillance by mediating tandem CCA addition to generate a CCACCA at the 3' terminus of unstable tRNAs. While stable tRNAs receive only 3'-terminal CCA, unstable tRNAs are marked with CCACCA and rapidly degraded. This is Multifunctional CCA protein from Vibrio campbellii (strain ATCC BAA-1116).